A 601-amino-acid polypeptide reads, in one-letter code: Elongation factor 4 (601 aa).

Positions 5 to 187 constitute a tr-type G domain; the sequence is DKIRNFSIIA…SIVKDLPAPQ (183 aa). GTP-binding positions include 17–22 and 134–137; these read DHGKST and NKVD.

This sequence belongs to the TRAFAC class translation factor GTPase superfamily. Classic translation factor GTPase family. LepA subfamily.

Its subcellular location is the cell inner membrane. It carries out the reaction GTP + H2O = GDP + phosphate + H(+). In terms of biological role, required for accurate and efficient protein synthesis under certain stress conditions. May act as a fidelity factor of the translation reaction, by catalyzing a one-codon backward translocation of tRNAs on improperly translocated ribosomes. Back-translocation proceeds from a post-translocation (POST) complex to a pre-translocation (PRE) complex, thus giving elongation factor G a second chance to translocate the tRNAs correctly. Binds to ribosomes in a GTP-dependent manner. The sequence is that of Elongation factor 4 from Maridesulfovibrio salexigens (strain ATCC 14822 / DSM 2638 / NCIMB 8403 / VKM B-1763) (Desulfovibrio salexigens).